The following is a 382-amino-acid chain: Proton extrusion protein PxcA (382 aa).

4 consecutive transmembrane segments (helical) span residues 162–182, 257–277, 305–325, and 340–360; these read ILLLLVLVPLLVQQVSNTYIV, AIKNVLADLAGLMAFVVVCLV, IILFTDIFVGYHSPEGWTVLL, and FILLFIATFPVILATIFKYWI.

This sequence belongs to the CemA family.

The protein resides in the cell inner membrane. Its function is as follows. Required for H(+) efflux immediately after light irradiation to form a rapid H(+) concentration gradient across the thylakoid membranes. Together with PxcL, contributes to transient H(+) uptake following dark to light transition. This Parasynechococcus marenigrum (strain WH8102) protein is Proton extrusion protein PxcA.